We begin with the raw amino-acid sequence, 229 residues long: Potassium/proton antiporter CemA (229 aa).

3 helical membrane passes run 6–26, 107–127, and 189–209; these read AFIP…ISLC, ILHF…SFWG, and ILSG…KYWI.

The protein belongs to the CemA family.

Its subcellular location is the plastid. The protein localises to the chloroplast inner membrane. The catalysed reaction is K(+)(in) + H(+)(out) = K(+)(out) + H(+)(in). Contributes to K(+)/H(+) antiport activity by supporting proton efflux to control proton extrusion and homeostasis in chloroplasts in a light-dependent manner to modulate photosynthesis. Prevents excessive induction of non-photochemical quenching (NPQ) under continuous-light conditions. Indirectly promotes efficient inorganic carbon uptake into chloroplasts. This Olimarabidopsis pumila (Dwarf rocket) protein is Potassium/proton antiporter CemA.